Consider the following 514-residue polypeptide: GTPase Obg (514 aa).

The Obg domain maps to 2–159 (ATFVDRVTVH…GDILLELKTV (158 aa)). The interval 62–88 (RRPHRSSGNGGFGMGDHRSGHTGEDLE) is disordered. Residues 76 to 85 (GDHRSGHTGE) show a composition bias toward basic and acidic residues. The OBG-type G domain occupies 160–336 (ADIALVGYPS…LSFALAELVE (177 aa)). GTP-binding positions include 166-173 (GYPSAGKS), 191-195 (FTTLH), 212-215 (DVPG), 288-291 (NKID), and 317-319 (STV). The Mg(2+) site is built by S173 and T193. Residues 356–440 (PKTVDDSGFV…ENGVVFDWEP (85 aa)) form the OCT domain.

It belongs to the TRAFAC class OBG-HflX-like GTPase superfamily. OBG GTPase family. In terms of assembly, monomer. The cofactor is Mg(2+).

It localises to the cytoplasm. An essential GTPase which binds GTP, GDP and possibly (p)ppGpp with moderate affinity, with high nucleotide exchange rates and a fairly low GTP hydrolysis rate. Plays a role in control of the cell cycle, stress response, ribosome biogenesis and in those bacteria that undergo differentiation, in morphogenesis control. This Leifsonia xyli subsp. xyli (strain CTCB07) protein is GTPase Obg.